The following is a 149-amino-acid chain: MKVIFLKDVKGKGKKGEIKNVADGYANNFLFKQGLAIEATPANLKALEAQKQKEQRQAAEELANAKKLKEQLEKLTVTIPAKAGEGGRLFGSITSKQIAESLQAQHGLKLDKRKIELADAIRALGYTNVPVKLHPEVTATLKVHVTEQK.

This sequence belongs to the bacterial ribosomal protein bL9 family.

Functionally, binds to the 23S rRNA. The sequence is that of Large ribosomal subunit protein bL9 (rplI) from Geobacillus stearothermophilus (Bacillus stearothermophilus).